The following is a 171-amino-acid chain: Lipoprotein signal peptidase (171 aa).

The next 3 helical transmembrane spans lie at 7-27 (GLIALLATLALDQASKLWLYF), 64-84 (LGRWLLVAVSLAAVIGLSVWM), and 88-108 (GSRLLAVALGLIVGGALGNAI). Catalysis depends on residues aspartate 118 and aspartate 136. Residues 128-148 (SWYVFNVADAAIVAGVVGLIL) traverse the membrane as a helical segment.

This sequence belongs to the peptidase A8 family.

Its subcellular location is the cell inner membrane. It carries out the reaction Release of signal peptides from bacterial membrane prolipoproteins. Hydrolyzes -Xaa-Yaa-Zaa-|-(S,diacylglyceryl)Cys-, in which Xaa is hydrophobic (preferably Leu), and Yaa (Ala or Ser) and Zaa (Gly or Ala) have small, neutral side chains.. It participates in protein modification; lipoprotein biosynthesis (signal peptide cleavage). In terms of biological role, this protein specifically catalyzes the removal of signal peptides from prolipoproteins. In Methylorubrum extorquens (strain PA1) (Methylobacterium extorquens), this protein is Lipoprotein signal peptidase.